The sequence spans 196 residues: Pyridoxal 5'-phosphate synthase subunit PdxT (196 aa).

Residue glycine 56–serine 58 coordinates L-glutamine. The Nucleophile role is filled by cysteine 85. Residues arginine 113 and isoleucine 141–arginine 142 contribute to the L-glutamine site. Catalysis depends on charge relay system residues histidine 177 and glutamate 179.

It belongs to the glutaminase PdxT/SNO family. In the presence of PdxS, forms a dodecamer of heterodimers. Only shows activity in the heterodimer.

It catalyses the reaction aldehydo-D-ribose 5-phosphate + D-glyceraldehyde 3-phosphate + L-glutamine = pyridoxal 5'-phosphate + L-glutamate + phosphate + 3 H2O + H(+). The catalysed reaction is L-glutamine + H2O = L-glutamate + NH4(+). It functions in the pathway cofactor biosynthesis; pyridoxal 5'-phosphate biosynthesis. Its function is as follows. Catalyzes the hydrolysis of glutamine to glutamate and ammonia as part of the biosynthesis of pyridoxal 5'-phosphate. The resulting ammonia molecule is channeled to the active site of PdxS. The chain is Pyridoxal 5'-phosphate synthase subunit PdxT from Methanospirillum hungatei JF-1 (strain ATCC 27890 / DSM 864 / NBRC 100397 / JF-1).